The sequence spans 419 residues: Pyrrolysine--tRNA ligase (419 aa).

The interval 100-157 (APKVKKAMPKSVSRAPKPLENSVSAKASTNTSRSVPSPAKSTPNSSVPASAPAPSLTR) is disordered. A compositionally biased stretch (polar residues) spans 120–141 (NSVSAKASTNTSRSVPSPAKST). Residues 142–154 (PNSSVPASAPAPS) show a composition bias toward low complexity.

The protein belongs to the class-II aminoacyl-tRNA synthetase family.

The protein resides in the cytoplasm. The catalysed reaction is tRNA(Pyl) + L-pyrrolysine + ATP = L-pyrrolysyl-tRNA(Pyl) + AMP + diphosphate. In terms of biological role, catalyzes the attachment of pyrrolysine to tRNA(Pyl). Pyrrolysine is a lysine derivative encoded by the termination codon UAG. The chain is Pyrrolysine--tRNA ligase (pylS) from Methanosarcina barkeri.